The following is a 430-amino-acid chain: Phosphomethylpyrimidine synthase (430 aa).

Substrate is bound by residues Asn68, Met96, Tyr125, His164, 186-188, 227-230, and Glu266; these read SRG and DALR. Residue His270 coordinates Zn(2+). Tyr293 is a binding site for substrate. His334 contributes to the Zn(2+) binding site. [4Fe-4S] cluster is bound by residues Cys410, Cys413, and Cys417.

This sequence belongs to the ThiC family. [4Fe-4S] cluster is required as a cofactor.

It carries out the reaction 5-amino-1-(5-phospho-beta-D-ribosyl)imidazole + S-adenosyl-L-methionine = 4-amino-2-methyl-5-(phosphooxymethyl)pyrimidine + CO + 5'-deoxyadenosine + formate + L-methionine + 3 H(+). It participates in cofactor biosynthesis; thiamine diphosphate biosynthesis. Catalyzes the synthesis of the hydroxymethylpyrimidine phosphate (HMP-P) moiety of thiamine from aminoimidazole ribotide (AIR) in a radical S-adenosyl-L-methionine (SAM)-dependent reaction. This chain is Phosphomethylpyrimidine synthase, found in Pyrobaculum aerophilum (strain ATCC 51768 / DSM 7523 / JCM 9630 / CIP 104966 / NBRC 100827 / IM2).